Consider the following 293-residue polypeptide: 4-hydroxy-tetrahydrodipicolinate synthase (293 aa).

A pyruvate-binding site is contributed by threonine 51. Tyrosine 140 acts as the Proton donor/acceptor in catalysis. Lysine 168 (schiff-base intermediate with substrate) is an active-site residue. Isoleucine 209 contacts pyruvate.

This sequence belongs to the DapA family. In terms of assembly, homotetramer; dimer of dimers.

The protein localises to the cytoplasm. It catalyses the reaction L-aspartate 4-semialdehyde + pyruvate = (2S,4S)-4-hydroxy-2,3,4,5-tetrahydrodipicolinate + H2O + H(+). The protein operates within amino-acid biosynthesis; L-lysine biosynthesis via DAP pathway; (S)-tetrahydrodipicolinate from L-aspartate: step 3/4. Functionally, catalyzes the condensation of (S)-aspartate-beta-semialdehyde [(S)-ASA] and pyruvate to 4-hydroxy-tetrahydrodipicolinate (HTPA). In Streptococcus mutans serotype c (strain ATCC 700610 / UA159), this protein is 4-hydroxy-tetrahydrodipicolinate synthase.